Here is a 281-residue protein sequence, read N- to C-terminus: Pantothenate synthetase (281 aa).

30–37 (MGYLHEGH) contributes to the ATP binding site. Catalysis depends on His-37, which acts as the Proton donor. Position 60 (Gln-60) interacts with (R)-pantoate. Position 60 (Gln-60) interacts with beta-alanine. 146-149 (GEKD) contacts ATP. Residue Gln-152 participates in (R)-pantoate binding. Residues Ile-175 and 183-186 (KSSR) contribute to the ATP site.

It belongs to the pantothenate synthetase family. Homodimer.

The protein resides in the cytoplasm. It catalyses the reaction (R)-pantoate + beta-alanine + ATP = (R)-pantothenate + AMP + diphosphate + H(+). The protein operates within cofactor biosynthesis; (R)-pantothenate biosynthesis; (R)-pantothenate from (R)-pantoate and beta-alanine: step 1/1. In terms of biological role, catalyzes the condensation of pantoate with beta-alanine in an ATP-dependent reaction via a pantoyl-adenylate intermediate. The sequence is that of Pantothenate synthetase from Ruminiclostridium cellulolyticum (strain ATCC 35319 / DSM 5812 / JCM 6584 / H10) (Clostridium cellulolyticum).